Here is a 187-residue protein sequence, read N- to C-terminus: Flavin prenyltransferase UbiX (187 aa).

FMN contacts are provided by residues 9–11 (GAS), serine 34, and arginine 123. Residues tyrosine 153 and lysine 169 each coordinate dimethylallyl phosphate.

This sequence belongs to the UbiX/PAD1 family.

The enzyme catalyses dimethylallyl phosphate + FMNH2 = prenylated FMNH2 + phosphate. In terms of biological role, flavin prenyltransferase that catalyzes the synthesis of the prenylated FMN cofactor (prenyl-FMN) for 4-hydroxy-3-polyprenylbenzoic acid decarboxylase UbiD. The prenyltransferase is metal-independent and links a dimethylallyl moiety from dimethylallyl monophosphate (DMAP) to the flavin N5 and C6 atoms of FMN. The protein is Flavin prenyltransferase UbiX of Helicobacter pylori (strain J99 / ATCC 700824) (Campylobacter pylori J99).